Here is a 260-residue protein sequence, read N- to C-terminus: ATP-dependent zinc metalloprotease FTSH, chloroplastic (260 aa).

His219 lines the Zn(2+) pocket. The active site involves Glu220. His223 lines the Zn(2+) pocket.

It in the N-terminal section; belongs to the AAA ATPase family. This sequence in the C-terminal section; belongs to the peptidase M41 family. Requires Zn(2+) as cofactor.

It localises to the plastid. The protein localises to the chloroplast thylakoid membrane. Its function is as follows. Probable ATP-dependent zinc metallopeptidase. This is ATP-dependent zinc metalloprotease FTSH, chloroplastic from Helianthus annuus (Common sunflower).